A 196-amino-acid chain; its full sequence is Dephospho-CoA kinase (196 aa).

The DPCK domain maps to 3 to 196 (RIGLTGNIGC…KVYEELTRDP (194 aa)). Residue 11 to 16 (GCGKST) coordinates ATP.

It belongs to the CoaE family.

Its subcellular location is the cytoplasm. The enzyme catalyses 3'-dephospho-CoA + ATP = ADP + CoA + H(+). The protein operates within cofactor biosynthesis; coenzyme A biosynthesis; CoA from (R)-pantothenate: step 5/5. In terms of biological role, catalyzes the phosphorylation of the 3'-hydroxyl group of dephosphocoenzyme A to form coenzyme A. This chain is Dephospho-CoA kinase, found in Aquifex aeolicus (strain VF5).